A 1119-amino-acid chain; its full sequence is DNA-directed RNA polymerase subunit beta (1119 aa).

The protein belongs to the RNA polymerase beta chain family. The RNAP catalytic core consists of 2 alpha, 1 beta, 1 beta' and 1 omega subunit. When a sigma factor is associated with the core the holoenzyme is formed, which can initiate transcription.

The enzyme catalyses RNA(n) + a ribonucleoside 5'-triphosphate = RNA(n+1) + diphosphate. Its function is as follows. DNA-dependent RNA polymerase catalyzes the transcription of DNA into RNA using the four ribonucleoside triphosphates as substrates. This is DNA-directed RNA polymerase subunit beta from Thermus aquaticus.